A 226-amino-acid polypeptide reads, in one-letter code: MEGNGSIDMFSEVLENQFLQAAKLVENHLDSEIQKLDQIGEDELELLKEKRLAALRKAQQQKQEWLSKGHGEYREIGSERDFFQEVKESEKVVCHFYRDTTFRCKILDRHLAILAKKHLETKFLKPNVEKAPFLCERLRIKVIPTLALLRDGKTQDYIVGFTDLGNTDDFTTETLEWRLGCSDVINYSGNLMEPPFQSQKKFGTNFTKLEKKTIRGKKYDSDSDDD.

The region spanning 75–180 (EIGSERDFFQ…TTETLEWRLG (106 aa)) is the Thioredoxin domain. A phosphoserine mark is found at Ser-188, Ser-221, and Ser-223.

Forms ternary complexes with the chaperonin TCP1 complex, spanning the cylindrical chaperonin cavity and contacting at least 2 subunits.

It is found in the cytoplasm. It localises to the nucleus. The protein resides in the cytoskeleton. Its subcellular location is the microtubule organizing center. The protein localises to the centrosome. It is found in the midbody. Its function is as follows. Significantly diminishes the chaperonin TCP1 complex ATPase activity, thus negatively impacts protein folding, including that of actin or tubulin. This chain is Thioredoxin domain-containing protein 9 (Txndc9), found in Rattus norvegicus (Rat).